A 631-amino-acid chain; its full sequence is Phosphomethylpyrimidine synthase (631 aa).

Substrate is bound by residues asparagine 239, methionine 268, tyrosine 297, histidine 333, serine 353–glycine 355, aspartate 394–arginine 397, and glutamate 433. Histidine 437 lines the Zn(2+) pocket. Tyrosine 460 contributes to the substrate binding site. Histidine 501 is a Zn(2+) binding site. [4Fe-4S] cluster contacts are provided by cysteine 581, cysteine 584, and cysteine 589.

It belongs to the ThiC family. In terms of assembly, homodimer. The cofactor is [4Fe-4S] cluster.

It catalyses the reaction 5-amino-1-(5-phospho-beta-D-ribosyl)imidazole + S-adenosyl-L-methionine = 4-amino-2-methyl-5-(phosphooxymethyl)pyrimidine + CO + 5'-deoxyadenosine + formate + L-methionine + 3 H(+). Its pathway is cofactor biosynthesis; thiamine diphosphate biosynthesis. In terms of biological role, catalyzes the synthesis of the hydroxymethylpyrimidine phosphate (HMP-P) moiety of thiamine from aminoimidazole ribotide (AIR) in a radical S-adenosyl-L-methionine (SAM)-dependent reaction. In Escherichia fergusonii (strain ATCC 35469 / DSM 13698 / CCUG 18766 / IAM 14443 / JCM 21226 / LMG 7866 / NBRC 102419 / NCTC 12128 / CDC 0568-73), this protein is Phosphomethylpyrimidine synthase.